The following is a 216-amino-acid chain: Large ribosomal subunit protein uL3 (216 aa).

Disordered stretches follow at residues 89-108 (QRAS…VGGF) and 139-158 (NTHG…QCQS). Glutamine 157 carries the N5-methylglutamine modification.

Belongs to the universal ribosomal protein uL3 family. Part of the 50S ribosomal subunit. Forms a cluster with proteins L14 and L19. Post-translationally, methylated by PrmB.

One of the primary rRNA binding proteins, it binds directly near the 3'-end of the 23S rRNA, where it nucleates assembly of the 50S subunit. This is Large ribosomal subunit protein uL3 from Halorhodospira halophila (strain DSM 244 / SL1) (Ectothiorhodospira halophila (strain DSM 244 / SL1)).